The following is a 347-amino-acid chain: MRIEQELKLGFKDVLFRPKRSTLKSRSQVNLTRDFTFKHSGRQWSGVPVIAANMDSVGSFAMAKALAEHGVMTAVHKHYTVEDWAEFANTADKATLNNVMVSTGTSEADFQKTKDIMAISDEFIFICIDIANGYSEHLVEYVQRVRAAFPDKVISAGNVVTGDMCEELILAGADIVKVGIGPGSVCTTRVKTGVGYPQLSAIIECGDAAHGLGGMIIGDGGCSCAGDVAKAFGGGADFVMLGGMLAGHEESGGEVIEQDGKQFMKFYGMSSKSAMDKHSGGVAGYRAAEGKTVLLPFRGSVHGTIQDILGGVRSTCTYVGAAKLKELTKRTTFIRVQEQENNVFGKE.

NADP(+) is bound at residue A108–A131. G181 and G183 together coordinate K(+). The active-site Thioimidate intermediate is the C186. I216–V239 lines the NADP(+) pocket.

It belongs to the IMPDH/GMPR family. GuaC type 1 subfamily. In terms of assembly, homotetramer.

The catalysed reaction is IMP + NH4(+) + NADP(+) = GMP + NADPH + 2 H(+). Functionally, catalyzes the irreversible NADPH-dependent deamination of GMP to IMP. It functions in the conversion of nucleobase, nucleoside and nucleotide derivatives of G to A nucleotides, and in maintaining the intracellular balance of A and G nucleotides. The sequence is that of GMP reductase from Vibrio campbellii (strain ATCC BAA-1116).